The following is a 347-amino-acid chain: Protein YIPF3 (347 aa).

The tract at residues 1–31 (MATPAAPASGVRNGAGPEWGGFEENIQGGGS) is disordered. Ala2 carries the N-acetylalanine; in Protein YIPF3, N-terminally processed modification. At 2-145 (ATPAAPASGV…PIKMVNFPQK (144 aa)) the chain is on the cytoplasmic side. A helical membrane pass occupies residues 146 to 166 (VAGELYGPLMLVFTLVAILLH). Residues 167–184 (GMKTSDTIIREGTLMGTA) lie on the Lumenal side of the membrane. A helical membrane pass occupies residues 185–205 (IGTCFGYWLGVSSFIYFLAYL). The Cytoplasmic segment spans residues 206–211 (CNAQIT). Residues 212-234 (MLQMLALLGYGLFGHCIVLFITY) traverse the membrane as a helical segment. Residues 235-237 (NIH) lie on the Lumenal side of the membrane. Residues 238-260 (LHALFYLFWLLVGGLSTLRMVAV) traverse the membrane as a helical segment. Residues 261 to 271 (LVSRTVGPTQR) are Cytoplasmic-facing. Residues 272 to 292 (LLLCGTLAALHMLFLLYLHFA) traverse the membrane as a helical segment. The Lumenal portion of the chain corresponds to 293-347 (YHKVVEGILDTLEGPNIPPMQRVPRDIPAVLPAARLPVAVINATAKAIAVTLQSH). An N-linked (GlcNAc...) asparagine glycan is attached at Asn334.

It belongs to the YIP1 family. In terms of assembly, interacts with YIPF4 and YIPF5. As to expression, expressed by splenocytes (at protein level).

The protein localises to the cell membrane. The protein resides in the golgi apparatus. It localises to the cis-Golgi network membrane. It is found in the cytoplasm. Involved in the maintenance of the Golgi structure. May play a role in hematopoiesis. This Mus musculus (Mouse) protein is Protein YIPF3 (Yipf3).